Here is a 300-residue protein sequence, read N- to C-terminus: Vetispiradiene synthase 2 (300 aa).

Mg(2+)-binding residues include D54, D58, D197, T201, and E205. Positions 54–58 (DDTFD) match the DDXXD motif motif.

This sequence belongs to the terpene synthase family. Tpsa subfamily. Requires Mg(2+) as cofactor.

The protein resides in the cytoplasm. The catalysed reaction is (2E,6E)-farnesyl diphosphate = (-)-vetispiradiene + diphosphate. Its pathway is secondary metabolite biosynthesis; terpenoid biosynthesis. In terms of biological role, sesquiterpene synthase that catalyzes the formation of vetispiradiene from trans,trans-farnesyl diphosphate. The initial internal cyclization produces the monocyclic intermediate germacrene A. The sequence is that of Vetispiradiene synthase 2 from Hyoscyamus muticus (Egyptian henbane).